Here is a 68-residue protein sequence, read N- to C-terminus: DNA-directed RNA polymerase subunit Rpo10 (68 aa).

Zn(2+) is bound by residues C7, C10, C44, and C45.

Belongs to the archaeal Rpo10/eukaryotic RPB10 RNA polymerase subunit family. Part of the RNA polymerase complex. It depends on Zn(2+) as a cofactor.

Its subcellular location is the cytoplasm. It carries out the reaction RNA(n) + a ribonucleoside 5'-triphosphate = RNA(n+1) + diphosphate. Functionally, DNA-dependent RNA polymerase (RNAP) catalyzes the transcription of DNA into RNA using the four ribonucleoside triphosphates as substrates. The polypeptide is DNA-directed RNA polymerase subunit Rpo10 (Methanococcus maripaludis (strain C6 / ATCC BAA-1332)).